We begin with the raw amino-acid sequence, 265 residues long: Asparagine-rich protein (265 aa).

The signal sequence occupies residues 1–21; sequence MSRLTLLVLLVIAAVIQKVHG. 2 disordered regions span residues 20–71 and 88–183; these read HGQG…NRNI and SNQN…NQQY. Basic and acidic residues-rich tracts occupy residues 22–35 and 44–55; these read QGRE…HEPG and EKTERNLREPNR. Low complexity predominate over residues 88-98; the sequence is SNQNNFGNNRS. Over residues 115-124 the composition is skewed to basic and acidic residues; that stretch reads NKSEVEKENG. A compositionally biased stretch (basic residues) spans 152 to 166; the sequence is KVQHRIAKRFQKRHP.

As to expression, nacreous layer of shell (at protein level). Expressed primarily in the mantle with highest level in the mantle pallium and lower level in the mantle edge.

It localises to the secreted. This is Asparagine-rich protein from Pinctada maxima (Silver-lipped pearl oyster).